A 267-amino-acid polypeptide reads, in one-letter code: Probable ribosomal RNA small subunit methyltransferase A (267 aa).

Residues Leu-12, Gly-37, Glu-58, Asp-83, and Asn-100 each contribute to the S-adenosyl-L-methionine site.

Belongs to the class I-like SAM-binding methyltransferase superfamily. rRNA adenine N(6)-methyltransferase family. RsmA subfamily.

It localises to the cytoplasm. Its function is as follows. Specifically dimethylates two adjacent adenosines in the loop of a conserved hairpin near the 3'-end of 16S rRNA in the 30S particle. May play a critical role in biogenesis of 30S subunits. The chain is Probable ribosomal RNA small subunit methyltransferase A from Methanococcus vannielii (strain ATCC 35089 / DSM 1224 / JCM 13029 / OCM 148 / SB).